We begin with the raw amino-acid sequence, 408 residues long: Branched-chain amino acid aminotransferase 2, chloroplastic (408 aa).

The N-terminal 58 residues, 1 to 58 (MDCAAALLPGFHPNYLLCPSRHFSSLLPKTDLSSPLKFQLQNKQLSLASSHGFSPVIC), are a transit peptide targeting the chloroplast. Residue Arg-152 coordinates pyridoxal 5'-phosphate. The Proton acceptor role is filled by Lys-254. Position 254 is an N6-(pyridoxal phosphate)lysine (Lys-254). Position 290 (Glu-290) interacts with pyridoxal 5'-phosphate.

This sequence belongs to the class-IV pyridoxal-phosphate-dependent aminotransferase family. It depends on pyridoxal 5'-phosphate as a cofactor. Expressed in lupulin glands and leaves.

It localises to the plastid. The protein localises to the chloroplast. It carries out the reaction L-isoleucine + 2-oxoglutarate = (S)-3-methyl-2-oxopentanoate + L-glutamate. The enzyme catalyses L-leucine + 2-oxoglutarate = 4-methyl-2-oxopentanoate + L-glutamate. The catalysed reaction is L-valine + 2-oxoglutarate = 3-methyl-2-oxobutanoate + L-glutamate. It functions in the pathway amino-acid biosynthesis; L-isoleucine biosynthesis; L-isoleucine from 2-oxobutanoate: step 4/4. The protein operates within amino-acid biosynthesis; L-leucine biosynthesis; L-leucine from 3-methyl-2-oxobutanoate: step 4/4. Its pathway is amino-acid biosynthesis; L-valine biosynthesis; L-valine from pyruvate: step 4/4. Its function is as follows. Converts 2-oxo acids to branched-chain amino acids. Shows no kinetic preferences corresponding to anabolic or catabolic functions, but likely involved in BCAA biosynthesis. The protein is Branched-chain amino acid aminotransferase 2, chloroplastic of Humulus lupulus (European hop).